We begin with the raw amino-acid sequence, 142 residues long: Large ribosomal subunit protein uL11 (142 aa).

This sequence belongs to the universal ribosomal protein uL11 family. Part of the ribosomal stalk of the 50S ribosomal subunit. Interacts with L10 and the large rRNA to form the base of the stalk. L10 forms an elongated spine to which L12 dimers bind in a sequential fashion forming a multimeric L10(L12)X complex. One or more lysine residues are methylated.

Its function is as follows. Forms part of the ribosomal stalk which helps the ribosome interact with GTP-bound translation factors. This Mycolicibacterium vanbaalenii (strain DSM 7251 / JCM 13017 / BCRC 16820 / KCTC 9966 / NRRL B-24157 / PYR-1) (Mycobacterium vanbaalenii) protein is Large ribosomal subunit protein uL11.